A 291-amino-acid polypeptide reads, in one-letter code: Putative ribosomal protein uL16-like, mitochondrial (291 aa).

The N-terminal 27 residues, 1 to 27 (MQRFMFSRVVEHQRQISRGFLSLVPSL), are a transit peptide targeting the mitochondrion. The span at 127–137 (VHETSNNEKKQ) shows a compositional bias: basic and acidic residues. Residues 127–173 (VHETSNNEKKQQKQKSSVNEKKPKKKKKSSISDIPRRTKFQKHHRGR) are disordered. The segment covering 163–173 (RTKFQKHHRGR) has biased composition (basic residues).

This sequence belongs to the universal ribosomal protein uL16 family.

It localises to the mitochondrion. In terms of biological role, could be a component of the large subunit of mitochondrial ribosome. In Arabidopsis thaliana (Mouse-ear cress), this protein is Putative ribosomal protein uL16-like, mitochondrial.